The primary structure comprises 904 residues: DNA mismatch repair protein MutS (904 aa).

Residue 654–661 (GPNMAGKS) coordinates ATP.

The protein belongs to the DNA mismatch repair MutS family.

This protein is involved in the repair of mismatches in DNA. It is possible that it carries out the mismatch recognition step. This protein has a weak ATPase activity. This chain is DNA mismatch repair protein MutS, found in Caulobacter sp. (strain K31).